A 505-amino-acid polypeptide reads, in one-letter code: Alpha-1-syntrophin (505 aa).

The segment at 1-77 (MASGRRAPRT…AEPGAASPPL (77 aa)) is disordered. PH domains follow at residues 6–269 (RAPR…AQVN) and 293–401 (DIKR…DGCH). The PDZ domain maps to 87–170 (RVTVRKADAG…EVVLEVKYMK (84 aa)). Phosphoserine is present on residues S101, S184, S189, S193, and S200. The segment at 180–211 (ASGTSVGWDSPPASPLQRQPSSPGPPPRDLRD) is disordered. One can recognise an SU domain in the interval 449-505 (PFEKLQMSSDDGASLLFLDFGGAEGEIQLDLHSCPKTMVFIIHSFLSAKVTRLGLLA). The segment at 483 to 505 (PKTMVFIIHSFLSAKVTRLGLLA) is calmodulin-binding.

The protein belongs to the syntrophin family. Monomer and homodimer. Interacts with the dystrophin related protein DTNA; SGCG of the dystrophin glycoprotein complex; NOS1; GRB2; GA; TGFA; MAPK12 and the sodium channel proteins SCN4A and SCN5A. Interacts with the dystrophin protein DMD in a calmodulin dependent manner and with related protein UTRN; SGCA of the dystrophin glycoprotein complex; F-actin; calmodulin and with the other members of the syntrophin family SNTB1 and SNTB2. Interacts with MYOC; regulates muscle hypertrophy. Interacts with DTNB. Phosphorylated by CaM-kinase II. Phosphorylation may inhibit the interaction with DMD.

The protein resides in the cell membrane. Its subcellular location is the sarcolemma. It localises to the cell junction. It is found in the cytoplasm. The protein localises to the cytoskeleton. Its function is as follows. Adapter protein that binds to and probably organizes the subcellular localization of a variety of membrane proteins. May link various receptors to the actin cytoskeleton and the extracellular matrix via the dystrophin glycoprotein complex. Plays an important role in synapse formation and in the organization of UTRN and acetylcholine receptors at the neuromuscular synapse. Binds to phosphatidylinositol 4,5-bisphosphate. The protein is Alpha-1-syntrophin (SNTA1) of Bos taurus (Bovine).